The primary structure comprises 94 residues: Co-chaperonin GroES (94 aa).

It belongs to the GroES chaperonin family. In terms of assembly, heptamer of 7 subunits arranged in a ring. Interacts with the chaperonin GroEL.

The protein localises to the cytoplasm. Together with the chaperonin GroEL, plays an essential role in assisting protein folding. The GroEL-GroES system forms a nano-cage that allows encapsulation of the non-native substrate proteins and provides a physical environment optimized to promote and accelerate protein folding. GroES binds to the apical surface of the GroEL ring, thereby capping the opening of the GroEL channel. The protein is Co-chaperonin GroES of Clostridium perfringens (strain SM101 / Type A).